The chain runs to 332 residues: NADH-quinone oxidoreductase subunit H (332 aa).

The next 9 helical transmembrane spans lie at 4–24 (FAFFALETLIKCIIIIAIFAS), 44–64 (IGPDMVGPFGLIQLVADMIKL), 78–98 (FIFAIAPLISAICAFVSLAAI), 120–140 (VALLFVIGTSGLCFYAVFLGG), 165–185 (VGALALIAIIMLVGSFSLVDI), 194–214 (FSWLIFKQPLAFVLFIIALFI), 255–275 (IAGAILVTLLFLGGFNSFWII), 279–299 (IMMIVKSSFIFFWYFWARAAF), and 312–332 (YLILIPLAVLNLLITALTVLL).

It belongs to the complex I subunit 1 family. NDH-1 is composed of 14 different subunits. Subunits NuoA, H, J, K, L, M, N constitute the membrane sector of the complex.

The protein resides in the cell inner membrane. It carries out the reaction a quinone + NADH + 5 H(+)(in) = a quinol + NAD(+) + 4 H(+)(out). Functionally, NDH-1 shuttles electrons from NADH, via FMN and iron-sulfur (Fe-S) centers, to quinones in the respiratory chain. The immediate electron acceptor for the enzyme in this species is believed to be ubiquinone. Couples the redox reaction to proton translocation (for every two electrons transferred, four hydrogen ions are translocated across the cytoplasmic membrane), and thus conserves the redox energy in a proton gradient. This subunit may bind ubiquinone. The polypeptide is NADH-quinone oxidoreductase subunit H (Campylobacter jejuni subsp. jejuni serotype O:2 (strain ATCC 700819 / NCTC 11168)).